The sequence spans 961 residues: Glycine dehydrogenase (decarboxylating) (961 aa).

Residue K709 is modified to N6-(pyridoxal phosphate)lysine.

It belongs to the GcvP family. In terms of assembly, the glycine cleavage system is composed of four proteins: P, T, L and H. It depends on pyridoxal 5'-phosphate as a cofactor.

It carries out the reaction N(6)-[(R)-lipoyl]-L-lysyl-[glycine-cleavage complex H protein] + glycine + H(+) = N(6)-[(R)-S(8)-aminomethyldihydrolipoyl]-L-lysyl-[glycine-cleavage complex H protein] + CO2. Its function is as follows. The glycine cleavage system catalyzes the degradation of glycine. The P protein binds the alpha-amino group of glycine through its pyridoxal phosphate cofactor; CO(2) is released and the remaining methylamine moiety is then transferred to the lipoamide cofactor of the H protein. This chain is Glycine dehydrogenase (decarboxylating), found in Teredinibacter turnerae (strain ATCC 39867 / T7901).